The primary structure comprises 435 residues: NADH-quinone oxidoreductase subunit D 2 (435 aa).

This sequence belongs to the complex I 49 kDa subunit family. In terms of assembly, NDH-1 is composed of 14 different subunits. Subunits NuoB, C, D, E, F, and G constitute the peripheral sector of the complex.

It is found in the cell inner membrane. It carries out the reaction a quinone + NADH + 5 H(+)(in) = a quinol + NAD(+) + 4 H(+)(out). Its function is as follows. NDH-1 shuttles electrons from NADH, via FMN and iron-sulfur (Fe-S) centers, to quinones in the respiratory chain. The immediate electron acceptor for the enzyme in this species is believed to be ubiquinone. Couples the redox reaction to proton translocation (for every two electrons transferred, four hydrogen ions are translocated across the cytoplasmic membrane), and thus conserves the redox energy in a proton gradient. This Stenotrophomonas maltophilia (strain R551-3) protein is NADH-quinone oxidoreductase subunit D 2.